The chain runs to 462 residues: UDP-N-acetylmuramoylalanine--D-glutamate ligase (462 aa).

ATP is bound at residue 112-118 (GTNGKTT).

This sequence belongs to the MurCDEF family.

Its subcellular location is the cytoplasm. The catalysed reaction is UDP-N-acetyl-alpha-D-muramoyl-L-alanine + D-glutamate + ATP = UDP-N-acetyl-alpha-D-muramoyl-L-alanyl-D-glutamate + ADP + phosphate + H(+). Its pathway is cell wall biogenesis; peptidoglycan biosynthesis. Its function is as follows. Cell wall formation. Catalyzes the addition of glutamate to the nucleotide precursor UDP-N-acetylmuramoyl-L-alanine (UMA). The polypeptide is UDP-N-acetylmuramoylalanine--D-glutamate ligase (Nostoc sp. (strain PCC 7120 / SAG 25.82 / UTEX 2576)).